The sequence spans 377 residues: Succinyl-diaminopimelate desuccinylase (377 aa).

Position 66 (histidine 66) interacts with Zn(2+). Residue aspartate 68 is part of the active site. Aspartate 99 contacts Zn(2+). The active-site Proton acceptor is the glutamate 133. Residues glutamate 134, glutamate 163, and histidine 349 each coordinate Zn(2+).

Belongs to the peptidase M20A family. DapE subfamily. Homodimer. Requires Zn(2+) as cofactor. It depends on Co(2+) as a cofactor.

The enzyme catalyses N-succinyl-(2S,6S)-2,6-diaminopimelate + H2O = (2S,6S)-2,6-diaminopimelate + succinate. It functions in the pathway amino-acid biosynthesis; L-lysine biosynthesis via DAP pathway; LL-2,6-diaminopimelate from (S)-tetrahydrodipicolinate (succinylase route): step 3/3. Catalyzes the hydrolysis of N-succinyl-L,L-diaminopimelic acid (SDAP), forming succinate and LL-2,6-diaminopimelate (DAP), an intermediate involved in the bacterial biosynthesis of lysine and meso-diaminopimelic acid, an essential component of bacterial cell walls. In Legionella pneumophila (strain Paris), this protein is Succinyl-diaminopimelate desuccinylase.